A 1040-amino-acid polypeptide reads, in one-letter code: Multidrug resistance protein MdtB (1040 aa).

11 helical membrane-spanning segments follow: residues 15–37 (LFILRPVATTLLMAAILLAGIIG), 345–362 (FELMLAIALVVMIIYLFL), 367–389 (ATIIPGVAVPLSLIGTFAVMVFL), 396–418 (LTLMALTIATGFVVDDAIVVIEN), 438–460 (GEIGFTIISLTFSLIAVLIPLLF), 472–494 (FAVTLAVAILISAVVSLTLTPMM), 535–557 (HPWLTLSVAFATLLLSVMLWIVI), 867–889 (VWLIVAAVVAMYIVLGVLYESFI), 909–931 (LIIAGSELDIIAIIGIILLIGIV), 968–990 (ILMTTLAALLGALPLMLSTGVGT), and 1000–1022 (MVGGLLVSQVLTLFTTPVIYLLF).

This sequence belongs to the resistance-nodulation-cell division (RND) (TC 2.A.6) family. MdtB subfamily. Part of a tripartite efflux system composed of MdtA, MdtB and MdtC. MdtB forms a heteromultimer with MdtC.

Its subcellular location is the cell inner membrane. This chain is Multidrug resistance protein MdtB, found in Salmonella typhimurium (strain LT2 / SGSC1412 / ATCC 700720).